Reading from the N-terminus, the 102-residue chain is Large ribosomal subunit protein bL21 (102 aa).

Belongs to the bacterial ribosomal protein bL21 family. Part of the 50S ribosomal subunit. Contacts protein L20.

Functionally, this protein binds to 23S rRNA in the presence of protein L20. This chain is Large ribosomal subunit protein bL21, found in Solidesulfovibrio magneticus (strain ATCC 700980 / DSM 13731 / RS-1) (Desulfovibrio magneticus).